The following is a 367-amino-acid chain: Cystinosin (367 aa).

Positions 1–22 are cleaved as a signal peptide; it reads MIRNWLTIFILFPLKLVEKCES. The Lumenal segment spans residues 23 to 125; that stretch reads SVSLTVPPVV…LVIRSSAISI (103 aa). 3 N-linked (GlcNAc...) (high mannose) asparagine glycosylation sites follow: asparagine 36, asparagine 41, and asparagine 51. Asparagine 66 carries an N-linked (GlcNAc...) asparagine glycan. Residues asparagine 84, asparagine 104, and asparagine 107 are each glycosylated (N-linked (GlcNAc...) (high mannose) asparagine). Residues 123-189 form the PQ-loop 1 domain; sequence ISIINQVIGW…LLWVPYIKEQ (67 aa). The helical transmembrane segment at 126–150 threads the bilayer; the sequence is INQVIGWIYFVAWSISFYPQVIMNW. At 151 to 159 the chain is on the cytoplasmic side; sequence RRKSVIGLS. The chain crosses the membrane as a helical span at residues 160 to 179; sequence FDFVALNLTGFVAYSVFNIG. Asparagine 166 is a binding site for L-cystine. Residues 180–202 lie on the Lumenal side of the membrane; sequence LLWVPYIKEQFLLKYPNGVNPVN. The chain crosses the membrane as a helical span at residues 203-225; the sequence is SNDVFFSLHAVVLTLIIIVQCCL. Aspartate 205 is a H(+) binding site. Over 226–234 the chain is Cytoplasmic; that stretch reads YERGGQRVS. Residues 235-257 traverse the membrane as a helical segment; sequence WPAIGFLVLAWLFAFVTMIVAAV. At 258-263 the chain is on the lumenal side; that stretch reads GVTTWL. Residues 263 to 328 enclose the PQ-loop 2 domain; that stretch reads LQFLFCFSYI…QSYNNDQWTL (66 aa). The chain crosses the membrane as a helical span at residues 264–289; sequence QFLFCFSYIKLAVTLVKYFPQAYMNF. 3 residues coordinate L-cystine: lysine 273, lysine 280, and tyrosine 281. At 290–298 the chain is on the cytoplasmic side; that stretch reads YYKSTEGWS. A helical transmembrane segment spans residues 299–308; the sequence is IGNVLLDFTG. 2 residues coordinate L-cystine: asparagine 301 and aspartate 305. Aspartate 305 is a binding site for H(+). Topologically, residues 309–331 are lumenal; the sequence is GSFSLLQMFLQSYNNDQWTLIFG. The helical transmembrane segment at 332-354 threads the bilayer; it reads DPTKFGLGVFSIVFDVVFFIQHF. Aspartate 346 contacts H(+). Over 355-367 the chain is Cytoplasmic; sequence CLYRKRPGYDQLN. Positions 362 to 366 match the Lysosomal targeting motif motif; it reads GYDQL.

The protein belongs to the cystinosin family. As to quaternary structure, interacts with components of the V-ATPase complex. Interacts with components of the Ragulator complex. Interacts with RRAGA/RagA and RRAGC/RagC. Interacts with AP-3 complex subunit mu (AP3M1 or AP3M2). As to expression, strongly expressed in pancreas, kidney (adult and fetal), skeletal muscle, melanocytes and keratinocytes. Expressed at lower levels in placenta and heart. Weakly expressed in lung, liver and brain (adult and fetal). Represents 5-20 % of CTNS transcripts, with the exception of the testis that expresses both isoforms in equal proportions.

The protein localises to the lysosome membrane. It localises to the melanosome membrane. Its subcellular location is the cell membrane. The catalysed reaction is L-cystine(out) + H(+)(out) = L-cystine(in) + H(+)(in). With respect to regulation, switches between a lumen- and a cytosol-open conformation: pH induces conformational changes and shifts the equilibrium to facilitate the transition between the lumen- and cytosol-open conformation, thereby promoting cystine transport. Protonation of specific aspartate residues (Asp-205, Asp-305 and Asp-346) favors the cytosol-open conformation. Its function is as follows. Cystine/H(+) symporter that mediates export of cystine, the oxidized dimer of cysteine, from lysosomes. Plays an important role in melanin synthesis by catalyzing cystine export from melanosomes, possibly by inhibiting pheomelanin synthesis. In addition to cystine export, also acts as a positive regulator of mTORC1 signaling in kidney proximal tubular cells, via interactions with components of the v-ATPase and Ragulator complexes. Also involved in small GTPase-regulated vesicle trafficking and lysosomal localization of LAMP2A, independently of cystine transporter activity. This Homo sapiens (Human) protein is Cystinosin.